Reading from the N-terminus, the 274-residue chain is Copper chaperone for superoxide dismutase (274 aa).

Residues 11-74 (ACMLEFAVQM…LLEDTGRQAV (64 aa)) enclose the HMA domain. Cu cation contacts are provided by C22 and C25. A Glycyl lysine isopeptide (Lys-Gly) (interchain with G-Cter in ubiquitin) cross-link involves residue K76. The interval 88–234 (AAVAILGGSG…LACGIIARSA (147 aa)) is superoxide dismutase-like. C141 and C227 are joined by a disulfide. Zn(2+) contacts are provided by H147, H155, H164, and D167. Residues K189, K216, and K241 each participate in a glycyl lysine isopeptide (Lys-Gly) (interchain with G-Cter in ubiquitin) cross-link. C244 and C246 together coordinate Cu cation.

In the C-terminal section; belongs to the Cu-Zn superoxide dismutase family. Homodimer, and heterodimer with SOD1. Interacts with COMMD1. Interacts with XIAP/BIRC4. Interacts with SLC31A1(via C-terminal domain); this interaction is Cu(1+)-mediated. The heterodimer CCS:SOD1 interacts with SLC31A1; this heterotrimer is Cu(1+)-mediated and its maintenance is regulated through SOD1 activation. Requires Cu(2+) as cofactor. The cofactor is Zn(2+). Ubiquitinion by XIAP/BIRC4 leads to enhancement of its chaperone activity toward its physiologic target, SOD1, rather than proteasomal degradation. XIAP/BIRC4 preferentially ubiquitinates at Lys-241.

It localises to the cytoplasm. Functionally, delivers copper to copper zinc superoxide dismutase (SOD1). The polypeptide is Copper chaperone for superoxide dismutase (Sus scrofa (Pig)).